A 461-amino-acid chain; its full sequence is Protein naked cuticle homolog 2 (461 aa).

Positions 1–106 (MGKFQSKHAA…DGEKAASREG (106 aa)) are disordered. A lipid anchor (N-myristoyl glycine) is attached at G2. Composition is skewed to basic and acidic residues over residues 34 to 73 (RGAE…DKGS) and 97 to 106 (DGEKAASREG). The interaction with DVL1, DVL2 and DVL3 stretch occupies residues 121 to 186 (QCDVSVEEDN…LRVKLTVSPE (66 aa)). Residues 127-162 (EEDNRQEWTFTLYDFDNSGKVTREDMSSLMHTIYEV) form the EF-hand domain. Positions 140, 142, 144, 146, and 151 each coordinate Ca(2+). Disordered stretches follow at residues 176–205 (TLRV…PTRG), 263–302 (YTSK…HAIH), 321–359 (TRAL…PGKA), 372–414 (SAQD…GQPT), and 441–461 (HEHH…FHPS). A compositionally biased stretch (basic and acidic residues) spans 188–205 (SSKKECPLTGQDREPTRG). Residues 307-396 (QVLAEHVIPA…PPQPYGHKRY (90 aa)) form an interaction with TGFA region. The span at 341 to 350 (PKGPGKPLGT) shows a compositional bias: low complexity. Residues 380-390 (PQPPPQPPPQP) are compositionally biased toward pro residues.

Belongs to the NKD family. Interacts with RNF25, TGFA (via cytoplasmic domain), and PPP2R3A. Interacts with DVL1, DVL2 and DVL3. In terms of processing, ubiquitinated, leading to rapid proteasomal degradation. Interaction with TGFA interferes with RNF25 binding and protects against ubiquitination mediated by RNF25. As to expression, expressed in the cecum, colon, esophagus, ileum, jejunum, skin and stomach.

It is found in the cell membrane. Its subcellular location is the cytoplasm. It localises to the cytoplasmic vesicle. Functionally, cell autonomous antagonist of the canonical Wnt signaling pathway. May activate a second Wnt signaling pathway that controls planar cell polarity. Required for processing of TGFA and for targeting of TGFA to the basolateral membrane of polarized epithelial cells. The sequence is that of Protein naked cuticle homolog 2 (Nkd2) from Mus musculus (Mouse).